The following is a 285-amino-acid chain: Eukaryotic translation initiation factor 2 subunit beta (285 aa).

Residues 30 to 69 are disordered; it reads DAAVNGKENGSGDDLFAGLKKKKKKSKSVSADAEAEKEPT. Position 40 is a phosphoserine (Ser40). The residue at position 69 (Thr69) is a Phosphothreonine. Phosphoserine occurs at positions 80, 92, and 112. Thr116 carries the phosphothreonine modification. Ser118 carries the post-translational modification Phosphoserine. Residues 236 to 262 form a C4-type zinc finger; sequence CKTCKSINTELKREQSNRLFFMVCKSC.

This sequence belongs to the eIF-2-beta/eIF-5 family. Eukaryotic translation initiation factor 2 eIF2 is a heterotrimeric complex composed of an alpha, a beta and a gamma subunit. The factors eIF-1, eIF-2, eIF-3, TIF5/eIF-5 and methionyl-tRNAi form a multifactor complex (MFC) that may bind to the 40S ribosome. Interacts with GCD6. Interacts with GCD1. Interacts with TIF5/eIF-5. Interacts with CDC123.

Its subcellular location is the cytoplasm. The protein localises to the cytosol. In terms of biological role, component of the eIF2 complex that functions in the early steps of protein synthesis by forming a ternary complex with GTP and initiator tRNA. This complex binds to a 40S ribosomal subunit, followed by mRNA binding to form a 43S pre-initiation complex (43S PIC). Junction of the 60S ribosomal subunit to form the 80S initiation complex is preceded by hydrolysis of the GTP bound to eIF2 and release of an eIF2-GDP binary complex. In order for eIF2 to recycle and catalyze another round of initiation, the GDP bound to eIF2 must exchange with GTP by way of a reaction catalyzed by eIF2B. The chain is Eukaryotic translation initiation factor 2 subunit beta (SUI3) from Saccharomyces cerevisiae (strain ATCC 204508 / S288c) (Baker's yeast).